The primary structure comprises 265 residues: MCMVIFAPLFAMFAFATCGGYSGGLRLSVDCVNKTESNLSIDIAFAYPFRLQQVTFEVPTCEGKEQQKLALVGDSSSSAEFFVTVAVFAFLYSLAATVVYIFFQNKYRENNRGPLIDFIVTVVFSFLWLVGSSAWAKGLSDVKVATDPKEVLLLMSACKQPSNKCMAVHSPVMSSLNTSVVFGFLNFILWAGNIWFVFKETGWHSSGQRYLSDPMEKHSSSYNQGRYNQESYGSSGGYSQQANLGPTSDEFGQQPSGPTSFNNQI.

Residues 1 to 4 (MCMV) lie on the Cytoplasmic side of the membrane. Positions 1–202 (MCMVIFAPLF…NIWFVFKETG (202 aa)) constitute an MARVEL domain. The helical transmembrane segment at 5 to 25 (IFAPLFAMFAFATCGGYSGGL) threads the bilayer. The Vesicular segment spans residues 26–81 (RLSVDCVNKTESNLSIDIAFAYPFRLQQVTFEVPTCEGKEQQKLALVGDSSSSAEF). N-linked (GlcNAc...) asparagine glycosylation is found at N33 and N38. Residues 82 to 102 (FVTVAVFAFLYSLAATVVYIF) form a helical membrane-spanning segment. Residues 103-114 (FQNKYRENNRGP) are Cytoplasmic-facing. The helical transmembrane segment at 115 to 135 (LIDFIVTVVFSFLWLVGSSAW) threads the bilayer. Topologically, residues 136 to 177 (AKGLSDVKVATDPKEVLLLMSACKQPSNKCMAVHSPVMSSLN) are vesicular. The helical transmembrane segment at 178 to 198 (TSVVFGFLNFILWAGNIWFVF) threads the bilayer. Residues 199–265 (KETGWHSSGQ…SGPTSFNNQI (67 aa)) lie on the Cytoplasmic side of the membrane. A run of 5 repeats spans residues 210–214 (YLSDP), 222–226 (YNQGR), 227–231 (YNQES), 232–236 (YGSSG), and 238–242 (YSQQA). A 5 X approximate repeats region spans residues 210–242 (YLSDPMEKHSSSYNQGRYNQESYGSSGGYSQQA). A Phosphoserine modification is found at S212. Polar residues predominate over residues 221-230 (SYNQGRYNQE). The interval 221–265 (SYNQGRYNQESYGSSGGYSQQANLGPTSDEFGQQPSGPTSFNNQI) is disordered. Polar residues predominate over residues 240 to 265 (QQANLGPTSDEFGQQPSGPTSFNNQI).

This sequence belongs to the synaptophysin/synaptobrevin family.

It localises to the cytoplasmic vesicle. The protein localises to the secretory vesicle. Its subcellular location is the synaptic vesicle membrane. The protein resides in the synapse. It is found in the synaptosome. Its function is as follows. Intrinsic membrane protein of small synaptic vesicles. Probable vesicular channel protein. This is Synaptoporin (Synpr) from Mus musculus (Mouse).